Here is a 427-residue protein sequence, read N- to C-terminus: O-methyltransferase FrzF (427 aa).

Asp-281 is a binding site for S-adenosyl-L-methionine. Catalysis depends on His-327, which acts as the Proton acceptor.

It belongs to the class I-like SAM-binding methyltransferase superfamily. Cation-independent O-methyltransferase family. In terms of assembly, homodimer.

The enzyme catalyses (1S,4S)-4-[(4-hydroxyphenyl)methyl]-2,5-diazaspiro[bicyclo[3.2.1]octane-6,1'-cyclohexan]-4'-one + S-adenosyl-L-methionine = (1S,4S)-4-[(4-methoxyphenyl)methyl]-2,5-diazaspiro[bicyclo[3.2.1]octane-6,1'-cyclohexan]-4'-one + S-adenosyl-L-homocysteine + H(+). The catalysed reaction is (1S,4S)-4-[(4-hydroxyphenyl)methyl]-2-methyl-2,5-diazaspiro[bicyclo[3.2.1]octane-6,1'-cyclohexan]-4'-one + S-adenosyl-L-methionine = (1S,4S)-4-[(4-methoxyphenyl)methyl]-2-methyl-2,5-diazaspiro[bicyclo[3.2.1]octane-6,1'-cyclohexan]-4'-one + S-adenosyl-L-homocysteine + H(+). It participates in secondary metabolite biosynthesis. O-methyltransferase; part of the gene cluster that mediates the biosynthesis of the alkaloid (-)-FR901483, a potent immunosuppressant that shows efficacy in animal models and a probable inhibitor of purine nucleotide biosynthesis by targeting phosphoribosylpyrophosphate amidotransferase (PPAT). Within the pathway, FrzF methylates the phenolic oxygen at position C4. The biosynthesis of (-)-FR901483 starts with the condensation of two L-tyrosines to yield (S,S)-dityrosyl-piperazine. This process occurs in 3 steps with the non-canonical nonribosomal peptide synthetase FrzA catalyzing the reduction of L-tyrosine into L-tyrosinal, the spontaneous condensation of 2 L-tyrosinal units, and the subsequent reduction by the NmrA-like family domain-containing oxidoreductase FrzB. The cytochrome P450 monooxygenase FrzC then performs coupling between N10 and C1' to morph the piperazine into a 1,4-diazabicyclo[3.2.1]octane spiro-fused to a 2,5-cyclohexadienone. The dienone portion is further reduced to cyclohexanone by the flavin-dependent reductase FrzD. The methyltranserases (MTs) FrzE and FrzF are then involved in the methylation at the C10' amine and the C4 phenolic oxygen, respectively. The order of the two MTs appear to be interchangeable. Cleavage of the C9-N10' bond by the dioxygenase FrzG then leads to formation of a conjugated iminium. In addition to the oxidation of C9, an additional dehydrogenation between C7 and C8 can occur to give a likely shunt product. The next biosynthetic step is the intramolecular aldol condensation catalyzed by the newly identified aldolase FrzH to yield an aza-tricyclic product with the formation of a C9-C3' bond. The short-chain dehydrogenase/reductase FrzI then produces dephospho-(-)-FR901483 that is phosphorylated at C4'-OH into (-)-FR901483 by the phosphotransferase FrzJ. In Cladobotryum sp, this protein is O-methyltransferase FrzF.